The primary structure comprises 160 residues: Sec-independent protein translocase protein TatB (160 aa).

The chain crosses the membrane as a helical span at residues 1 to 21 (MFGMGFFEILVVLIVAIIFLG). The segment at 118–160 (HLNEEVSNEEALNKEVSSDESPKEVQLTTDNNAKEHDKEKEHV) is disordered. Basic and acidic residues-rich tracts occupy residues 128–140 (ALNK…ESPK) and 149–160 (NAKEHDKEKEHV).

It belongs to the TatB family. As to quaternary structure, the Tat system comprises two distinct complexes: a TatABC complex, containing multiple copies of TatA, TatB and TatC subunits, and a separate TatA complex, containing only TatA subunits. Substrates initially bind to the TatABC complex, which probably triggers association of the separate TatA complex to form the active translocon.

It localises to the cell inner membrane. In terms of biological role, part of the twin-arginine translocation (Tat) system that transports large folded proteins containing a characteristic twin-arginine motif in their signal peptide across membranes. Together with TatC, TatB is part of a receptor directly interacting with Tat signal peptides. TatB may form an oligomeric binding site that transiently accommodates folded Tat precursor proteins before their translocation. This Helicobacter pylori (strain J99 / ATCC 700824) (Campylobacter pylori J99) protein is Sec-independent protein translocase protein TatB.